The primary structure comprises 520 residues: Cyclic AMP-responsive element-binding protein 3-like protein 2 (520 aa).

Residues 1–378 (MEVLESGEQG…CKLAGTQTGT (378 aa)) are Cytoplasmic-facing. S93 is subject to Phosphoserine. K178 is covalently cross-linked (Glycyl lysine isopeptide (Lys-Gly) (interchain with G-Cter in SUMO2)). Phosphoserine is present on S191. The segment at 195 to 264 (APVDHLHLPP…PHKLQGSGPL (70 aa)) is disordered. 2 stretches are compositionally biased toward low complexity: residues 208–220 (SSHGSDSEGSLSP) and 234–255 (SPSRAAPRAPSALSSSPLLTAP). In terms of domain architecture, bZIP spans 294 to 357 (ALKKIRRKIK…RTLLQQLQKL (64 aa)). The segment at 296–325 (KKIRRKIKNKISAQESRRKKKEYMDSLEKK) is basic motif. Residues 336–357 (LRKKVEVLENTNRTLLQQLQKL) are leucine-zipper. A helical; Signal-anchor for type II membrane protein membrane pass occupies residues 379–399 (CLMVVVLCFAVAFGSFFQGYG). At 400 to 520 (PYPSATKMAL…ELDRRVNTTF (121 aa)) the chain is on the lumenal side. The S1P recognition signature appears at 427-430 (RNLL). N480, N504, and N517 each carry an N-linked (GlcNAc...) asparagine glycan.

It belongs to the bZIP family. ATF subfamily. In terms of assembly, binds DNA as a dimer. In terms of processing, upon ER stress, translocated to the Golgi apparatus, where it is processed by regulated intramembrane proteolysis (RIP) to release the cytosol-facing N-terminal transcription factor domain. The cleavage is performed sequentially by site-1 and site-2 proteases (S1P/MBTPS1 and S2P/MBTPS2). N-glycosylated. Post-translationally, ubiquitinated by HRD1/SYVN1; undergoes 'Lys-48'-linked ubiquitination, followed by rapid proteasomal degradation under normal conditions. Upon ER stress, SYVN1 E3 ubiquitin-protein ligase dissociates from its substrate, ubiquitination does not occur and CREB3L2 is stabilized.

Its subcellular location is the endoplasmic reticulum membrane. It is found in the nucleus. Its function is as follows. Transcription factor involved in unfolded protein response (UPR). In the absence of endoplasmic reticulum (ER) stress, inserted into ER membranes, with N-terminal DNA-binding and transcription activation domains oriented toward the cytosolic face of the membrane. In response to ER stress, transported to the Golgi, where it is cleaved in a site-specific manner by resident proteases S1P/MBTPS1 and S2P/MBTPS2. The released N-terminal cytosolic domain is translocated to the nucleus to effect transcription of specific target genes. Plays a critical role in chondrogenesis by activating the transcription of SEC23A, which promotes the transport and secretion of cartilage matrix proteins, and possibly that of ER biogenesis-related genes. In a neuroblastoma cell line, protects cells from ER stress-induced death. In vitro activates transcription of target genes via direct binding to the CRE site. The polypeptide is Cyclic AMP-responsive element-binding protein 3-like protein 2 (CREB3L2) (Pongo abelii (Sumatran orangutan)).